A 194-amino-acid polypeptide reads, in one-letter code: ATP-dependent Clp protease proteolytic subunit (194 aa).

The active-site Nucleophile is S98. The active site involves H123.

Belongs to the peptidase S14 family. As to quaternary structure, fourteen ClpP subunits assemble into 2 heptameric rings which stack back to back to give a disk-like structure with a central cavity, resembling the structure of eukaryotic proteasomes.

The protein localises to the cytoplasm. The enzyme catalyses Hydrolysis of proteins to small peptides in the presence of ATP and magnesium. alpha-casein is the usual test substrate. In the absence of ATP, only oligopeptides shorter than five residues are hydrolyzed (such as succinyl-Leu-Tyr-|-NHMec, and Leu-Tyr-Leu-|-Tyr-Trp, in which cleavage of the -Tyr-|-Leu- and -Tyr-|-Trp bonds also occurs).. In terms of biological role, cleaves peptides in various proteins in a process that requires ATP hydrolysis. Has a chymotrypsin-like activity. Plays a major role in the degradation of misfolded proteins. The chain is ATP-dependent Clp protease proteolytic subunit from Actinobacillus succinogenes (strain ATCC 55618 / DSM 22257 / CCUG 43843 / 130Z).